The following is a 277-amino-acid chain: Large ribosomal subunit protein uL2 (277 aa).

A disordered region spans residues 215–263 (LGRKPHQRGSAMNPVDHPHGGGEGRTGAGRVPVSPWGQPAKGLKTRKKR).

It belongs to the universal ribosomal protein uL2 family. As to quaternary structure, part of the 50S ribosomal subunit. Forms a bridge to the 30S subunit in the 70S ribosome.

One of the primary rRNA binding proteins. Required for association of the 30S and 50S subunits to form the 70S ribosome, for tRNA binding and peptide bond formation. It has been suggested to have peptidyltransferase activity; this is somewhat controversial. Makes several contacts with the 16S rRNA in the 70S ribosome. In Deinococcus geothermalis (strain DSM 11300 / CIP 105573 / AG-3a), this protein is Large ribosomal subunit protein uL2.